The following is a 278-amino-acid chain: MKKNRAFLKWAGGKYPLLDDIKRHLPKGECLVEPFVGAGSVFLNTDFSRYILADINSDLISLYNIVKMRTDEYVQAARELFVPETNCAEVYYQFREEFNKSQDPFRRAVLFLYLNRYGYNGLCRYNLRGEFNVPFGRYKKPYFPEAELYHFAEKAQNAFFYCESYADSMARADDASVVYCDPPYAPLSATANFTAYHTNSFTLEQQAHLAEIAEGLVERHIPVLISNHDTMLTREWYQRAKLHVVKVRRSISSNGGTRKKVDELLALYKPGVVSPAKK.

S-adenosyl-L-methionine is bound by residues Trp10, Lys14, Asp54, and Asp181.

Belongs to the N(4)/N(6)-methyltransferase family.

It carries out the reaction a 2'-deoxyadenosine in DNA + S-adenosyl-L-methionine = an N(6)-methyl-2'-deoxyadenosine in DNA + S-adenosyl-L-homocysteine + H(+). An alpha subtype methylase, recognizes the double-stranded sequence 5'-GATC-3' and methylates A-2. May be involved in methyl-directed DNA mismatch repair, initiation of chromosome replication and gene expression. In Escherichia coli O157:H7, this protein is DNA adenine methylase (dam).